The sequence spans 250 residues: MLLIPAIDLKDGQCVRLKQGDMDQATIFSEEPAAMARHWVDRGARRLHLVDLNGAFAGKPKNEDAIRAIIAEVGGEIPVQLGGGIRDLNTIERYLDDGLSYVIIGTAAVKNPGFLQDACTAFGGHIIVGLDAKDGKVATDGWSKLTGHEVADLARKFEDYGCESIIYTDIGRDGMLQGINIEATVRLARAVKIPVIASGGLSNLADIESLCEVEDEGIEGVICGRAIYSGDLDFAAAQTLADRLRESDDA.

The active-site Proton acceptor is aspartate 8. The active-site Proton donor is the aspartate 131.

Belongs to the HisA/HisF family.

The protein resides in the cytoplasm. It carries out the reaction 1-(5-phospho-beta-D-ribosyl)-5-[(5-phospho-beta-D-ribosylamino)methylideneamino]imidazole-4-carboxamide = 5-[(5-phospho-1-deoxy-D-ribulos-1-ylimino)methylamino]-1-(5-phospho-beta-D-ribosyl)imidazole-4-carboxamide. Its pathway is amino-acid biosynthesis; L-histidine biosynthesis; L-histidine from 5-phospho-alpha-D-ribose 1-diphosphate: step 4/9. The chain is 1-(5-phosphoribosyl)-5-[(5-phosphoribosylamino)methylideneamino] imidazole-4-carboxamide isomerase from Paraburkholderia xenovorans (strain LB400).